A 410-amino-acid polypeptide reads, in one-letter code: Eukaryotic initiation factor 4A (410 aa).

The short motif at 37–65 is the Q motif element; that stretch reads ESFDSMGLQENLLRGIYAYGFEKPSAIQQ. One can recognise a Helicase ATP-binding domain in the interval 68-238; it reads IVPFCKGLDV…RKFMNKPVRI (171 aa). 81 to 88 is an ATP binding site; sequence AQSGTGKT. Positions 186 to 189 match the DEAD box motif; sequence DEAD. The Helicase C-terminal domain occupies 249 to 410; it reads GIKQFYVNID…ELPANVADLL (162 aa).

Belongs to the DEAD box helicase family. eIF4A subfamily. In terms of assembly, eIF4F is a multi-subunit complex, the composition of which varies with external and internal environmental conditions. It is composed of at least EIF4A, EIF4E and EIF4G.

It carries out the reaction ATP + H2O = ADP + phosphate + H(+). In terms of biological role, ATP-dependent RNA helicase which is a subunit of the eIF4F complex involved in cap recognition and is required for mRNA binding to ribosome. In the current model of translation initiation, eIF4A unwinds RNA secondary structures in the 5'-UTR of mRNAs which is necessary to allow efficient binding of the small ribosomal subunit, and subsequent scanning for the initiator codon. In Zea mays (Maize), this protein is Eukaryotic initiation factor 4A.